Reading from the N-terminus, the 748-residue chain is MLRAKNQLFLLSPHYLKQLNIPSASRWKRLLHQQQPLHPEWAVLAKKQLKGKNPEDLIWHTPEGISIKPLYSRADTLDLPEELPGVKPFTRGPYPTMYTYRPWTIRQYAGFSTVEESNKFYKDNIKAGQQGLSVAFDLATHRGYDSDNPRVRGDVGMAGVAIDTVEDTKILFDGIPLEKMSVSMTMNGAVIPVLATFIVTGEEQGVPKEKLTGTIQNDILKEFMVRNTYIFPPEPSMKIIADIFQYTAQHMPKFNSISISGYHMQEAGADAILELAYTIADGLEYCRTGLQAGLTIDEFAPRLSFFWGIGMNFYMEIAKMRAGRRLWAHLIEKMFQPKNSKSLLLRAHCQTSGWSLTEQDPYNNIVRTAIEAMAAVFGGTQSLHTNSFDEALGLPTVKSARIARNTQIIIQEESGIPKVADPWGGSYMMESLTNDVYEAALKLIYEVEEMGGMAKAVAEGIPKLRIEECAARRQARIDSGSEVIVGVNKYQLEKEDSVEVLAIDNTSVRKKQIEKLKKIKSSRDQALAEQCLSALTQCAASGDGNILALAVDAARARCTVGEITDALKKVFGEHKANDRMVSGAYRQEFGESKEITSAIKRVNKFMEREGRRPRLLVAKMGQDGHDRGAKVIATGFADLGFDVDIGPLFQTPREVAQQAVDADVHAVGVSTLAAGHKTLVPELIKELTALGRPDILVMCGGVIPPQDYEFLYEVGVSNVFGPGTRIPRAAVQVLDDIEKCLAEKQQSV.

The transit peptide at 1–30 directs the protein to the mitochondrion; that stretch reads MLRAKNQLFLLSPHYLKQLNIPSASRWKRL. Residue Gln-48 participates in malonyl-CoA binding. N6-acetyllysine is present on Lys-87. Malonyl-CoA contacts are provided by residues 94–97 and 104–108; these read YPTM and TIRQY. N6-acetyllysine is present on Lys-210. Malonyl-CoA-binding positions include 214–216, Arg-226, Lys-253, His-263, and 302–304; these read TIQ and RLS. Lys-333 carries the post-translational modification N6-acetyllysine. Lys-341 bears the N6-succinyllysine mark. Position 479 is a phosphoserine (Ser-479). An N6-succinyllysine modification is found at Lys-593. Lys-600 carries the post-translational modification N6-acetyllysine. The 133-residue stretch at 612-744 folds into the B12-binding domain; the sequence is RPRLLVAKMG…DDIEKCLAEK (133 aa). Residue His-625 participates in adenosylcob(III)alamin binding.

The protein belongs to the methylmalonyl-CoA mutase family. In terms of assembly, homodimer. Interacts (the apoenzyme form) with MMAA; the interaction is GTP dependent. The cofactor is adenosylcob(III)alamin.

It localises to the mitochondrion matrix. It is found in the mitochondrion. The protein resides in the cytoplasm. It carries out the reaction (R)-methylmalonyl-CoA = succinyl-CoA. Its activity is regulated as follows. Inhibited by itaconyl-CoA, a metabolite that inactivates the coenzyme B12 cofactor. Its function is as follows. Catalyzes the reversible isomerization of methylmalonyl-CoA (MMCoA) (generated from branched-chain amino acid metabolism and degradation of dietary odd chain fatty acids and cholesterol) to succinyl-CoA (3-carboxypropionyl-CoA), a key intermediate of the tricarboxylic acid cycle. This Mus musculus (Mouse) protein is Methylmalonyl-CoA mutase, mitochondrial (Mmut).